A 217-amino-acid chain; its full sequence is Phosphoenolpyruvate guanylyltransferase (217 aa).

The phosphoenolpyruvate site is built by Thr-150, Gly-165, and Ser-168.

The protein belongs to the CofC family.

The enzyme catalyses phosphoenolpyruvate + GTP + H(+) = enolpyruvoyl-2-diphospho-5'-guanosine + diphosphate. Its pathway is cofactor biosynthesis; coenzyme F420 biosynthesis. Its function is as follows. Guanylyltransferase that catalyzes the activation of phosphoenolpyruvate (PEP) as enolpyruvoyl-2-diphospho-5'-guanosine, via the condensation of PEP with GTP. It is involved in the biosynthesis of coenzyme F420, a hydride carrier cofactor. The sequence is that of Phosphoenolpyruvate guanylyltransferase from Mycobacterium marinum (strain ATCC BAA-535 / M).